We begin with the raw amino-acid sequence, 315 residues long: Ribonuclease Z (315 aa).

Zn(2+)-binding residues include histidine 62, histidine 64, aspartate 66, histidine 67, histidine 144, aspartate 215, and histidine 273. The Proton acceptor role is filled by aspartate 66.

It belongs to the RNase Z family. In terms of assembly, homodimer. Requires Zn(2+) as cofactor.

It carries out the reaction Endonucleolytic cleavage of RNA, removing extra 3' nucleotides from tRNA precursor, generating 3' termini of tRNAs. A 3'-hydroxy group is left at the tRNA terminus and a 5'-phosphoryl group is left at the trailer molecule.. In terms of biological role, zinc phosphodiesterase, which displays some tRNA 3'-processing endonuclease activity. Probably involved in tRNA maturation, by removing a 3'-trailer from precursor tRNA. This is Ribonuclease Z from Synechococcus sp. (strain CC9311).